Here is a 332-residue protein sequence, read N- to C-terminus: DNA-directed RNA polymerase subunit alpha (332 aa).

An alpha N-terminal domain (alpha-NTD) region spans residues 1-234 (MIEYVIPKKL…NHLQIITDSL (234 aa)). The interval 264–332 (AVYSKKIDEL…KFGLSLKKGG (69 aa)) is alpha C-terminal domain (alpha-CTD).

The protein belongs to the RNA polymerase alpha chain family. Homodimer. The RNAP catalytic core consists of 2 alpha, 1 beta, 1 beta' and 1 omega subunit. When a sigma factor is associated with the core the holoenzyme is formed, which can initiate transcription.

The enzyme catalyses RNA(n) + a ribonucleoside 5'-triphosphate = RNA(n+1) + diphosphate. DNA-dependent RNA polymerase catalyzes the transcription of DNA into RNA using the four ribonucleoside triphosphates as substrates. The polypeptide is DNA-directed RNA polymerase subunit alpha (Pseudothermotoga lettingae (strain ATCC BAA-301 / DSM 14385 / NBRC 107922 / TMO) (Thermotoga lettingae)).